The primary structure comprises 1083 residues: MHFFQTILRWKTAKGQKSVTFKKDDGPYSKGNKDPAGNDLALVSRRQSIPEEFRGVTIVELIKKEGSTLGLTISGGTDKDGKPRVSNLRPGGLAARSDQLNIGDYIKSVNGINLTKLRHEEIISLLKNVGERVVLEVEYELPPGTPDNSSAIIPKTIEITLCKEGNSFGFVMRGGAHEDWHKSRALVVTYVRPGGPADREGTLKVGDRLLCVDGISLHNITHTDALSILRQCSQEGVFQIEYDVALMDTVTNASGPLLVEIAKTPGSTLGISLSTGTHRNKQVIVIDKVKPASVVDRCGALHPGDHILSIDGTSTEHCTQMEATQLLASIIENVKLEILPAHHSRLPLRPPETVKVQKSDHHHCWDPCVNYCHTPHPGHCKTPTWNPTSNQDYCKSLVAANFSSSSVAGTPGFSSQNSNTLPRTVHPMSPRTTMNRRRQKRKDHKSSLSLASSTVGPGGQIIHTESTEIILRGDPLNGFGIQLQGGIFATETLSSPPLIRFIEPDSPAERCGLLQVGDRLLSINGILTEDGTLEEANQLLRDAALSNKVALEIEFDVAESVVPSSGTFHVKLPKRKGVELGITISSSRKPGEPLIISDIKKGSVAHRTGTLEPGDKLLAIDNIRLDNCSMEDAVQILRQCEDLVKLKIRKDEDNSDEQETSGAIIYTVELKRYGGPLGITISGTEEPFDPIVISGLTKRGLAERTGAIHIGDRILAINNISLKGKPLSEAIHLLQMAGETVTLKIKKQTERIFPQRLSDSMNEGSDPEDDLTDSQKTSKLSEIYSTTVPSVDSALESWDGSGIDAGYGSQGTYVPQAVGISLHPHEWRTSRQKSNTPPVEHRKSYPFLDGSFNEQDWEKPTRYPSQPNGLETDHDDSFWRVFGEALEDLETCGQSELLREIEASIMTGSVQDLGLDSSQILLENSSQGGHVLFRRGSHHISSNSPKKENKLSQDARSKKEEVHNAQSLTTELLKVTVQKDMDTDDFGFSVSDGLLEKGVYVNMIRPGGPADRSGLKTYDQILQVNHVRTRDFDCCLTVPLLSDAGDRLDLVISRGLSIKAEEMGVEQIKGPLRMETQTSTKTL.

PDZ domains are found at residues 58-141 (IVEL…EYEL), 156-244 (TIEI…EYDV), and 258-342 (LVEI…LPAH). Polar residues predominate over residues 408-422 (AGTPGFSSQNSNTLP). A disordered region spans residues 408–460 (AGTPGFSSQNSNTLPRTVHPMSPRTTMNRRRQKRKDHKSSLSLASSTVGPGGQ). The segment covering 434–444 (MNRRRQKRKDH) has biased composition (basic residues). PDZ domains lie at 468 to 555 (EIIL…EIEF), 569 to 652 (HVKL…RKDE), and 667 to 749 (TVEL…KKQT). Disordered stretches follow at residues 754 to 783 (PQRL…LSEI), 853 to 872 (NEQD…GLET), and 936 to 965 (GSHH…VHNA). The segment covering 774–783 (SQKTSKLSEI) has biased composition (polar residues). Basic and acidic residues predominate over residues 945–963 (PKKENKLSQDARSKKEEVH). One can recognise a PDZ 7 domain in the interval 974–1056 (KVTVQKDMDT…RLDLVISRGL (83 aa)).

It belongs to the GRIP2 family. As to expression, enriched in the mitochondrial cloud of stage I oocytes, before becoming concentrated at the tip of the vegetal cortex in stage II oocytes. Expression becomes localized to the germ plasm of stage III-IV oocytes and early cleavage stages. At the tailbud stage, localizes to the migrating primordial germ cells (PGCs) until PGC migration is complete (stage 40), at which point expression disappears. In the adult, expressed in the brain, ovary, eye, muscle, spinal cord and very weakly in adipocytes.

Its subcellular location is the cytoplasm. Plays an important role in primordial germ cell (PGC) maintenance and efficiency of PGC migration. This chain is Glutamate receptor-interacting protein 2, found in Xenopus laevis (African clawed frog).